The chain runs to 230 residues: Large ribosomal subunit protein uL1 (230 aa).

This sequence belongs to the universal ribosomal protein uL1 family. Part of the 50S ribosomal subunit.

In terms of biological role, binds directly to 23S rRNA. The L1 stalk is quite mobile in the ribosome, and is involved in E site tRNA release. Functionally, protein L1 is also a translational repressor protein, it controls the translation of the L11 operon by binding to its mRNA. This chain is Large ribosomal subunit protein uL1, found in Limosilactobacillus fermentum (strain NBRC 3956 / LMG 18251) (Lactobacillus fermentum).